Consider the following 144-residue polypeptide: Large ribosomal subunit protein uL15 (144 aa).

Residues 1 to 59 (MELNNLKPAEGAKHAKRRVGRGIGSGLGKTAGRGHKGQKSRSGGFHKVGFEGGQMPLQR) are disordered. Gly residues predominate over residues 21–31 (RGIGSGLGKTA).

It belongs to the universal ribosomal protein uL15 family. Part of the 50S ribosomal subunit.

Binds to the 23S rRNA. The sequence is that of Large ribosomal subunit protein uL15 from Burkholderia thailandensis (strain ATCC 700388 / DSM 13276 / CCUG 48851 / CIP 106301 / E264).